The primary structure comprises 415 residues: MSKRRVVVTGMGMLSPVGNTVESSWKALLEGQSGIVNIEHFDATNFSTRFAGLVKDFDCTEYMSKKDARKMDLFIQYGIAAGIQALDDSGLEITEENAARVGVAIGSGIGGLDLIEAGHSALVEKGPRKVSPFFVPSTIVNMVAGNLSIMRGLRGPNIAISTACTTGLHNIGHAARMIAYGDAEAMVAGGAEKASTPLGMAGFGAAKALSTRNDEPQKASRPWDKGRDGFVLGDGAGVMVLEEYEHAKARGAKIYAELVGFGMSGDAYHMTSPSEDGSGGALAMEAAMRDANITGTQVGYVNAHGTSTPAGDVAEIKGVKRALGEEGSKQVLVSSTKSMTGHLLGAAGSVEAIITVLSLVDQIVPPTINLDDPEEGLDIDLVPHTARKVDMEYAICNSFGFGGTNGSLVFKKIAE.

The Ketosynthase family 3 (KS3) domain occupies Lys-3–Lys-412. Active-site for beta-ketoacyl synthase activity residues include Cys-164, His-304, and His-342.

This sequence belongs to the thiolase-like superfamily. Beta-ketoacyl-ACP synthases family. Homodimer.

It carries out the reaction a fatty acyl-[ACP] + malonyl-[ACP] + H(+) = a 3-oxoacyl-[ACP] + holo-[ACP] + CO2. The enzyme catalyses (9Z)-hexadecenoyl-[ACP] + malonyl-[ACP] + H(+) = 3-oxo-(11Z)-octadecenoyl-[ACP] + holo-[ACP] + CO2. It functions in the pathway lipid metabolism; fatty acid biosynthesis. In terms of biological role, involved in the type II fatty acid elongation cycle. Catalyzes the elongation of a wide range of acyl-ACP by the addition of two carbons from malonyl-ACP to an acyl acceptor. Can efficiently catalyze the conversion of palmitoleoyl-ACP (cis-hexadec-9-enoyl-ACP) to cis-vaccenoyl-ACP (cis-octadec-11-enoyl-ACP), an essential step in the thermal regulation of fatty acid composition. The protein is 3-oxoacyl-[acyl-carrier-protein] synthase 2 (fabF) of Vibrio harveyi (Beneckea harveyi).